The following is a 591-amino-acid chain: L-fucose isomerase (591 aa).

Catalysis depends on proton acceptor residues glutamate 337 and aspartate 361. Mn(2+) is bound by residues glutamate 337, aspartate 361, and histidine 528.

It belongs to the L-fucose isomerase family. As to quaternary structure, homohexamer. Requires Mn(2+) as cofactor.

It is found in the cytoplasm. The catalysed reaction is L-fucose = L-fuculose. It participates in carbohydrate degradation; L-fucose degradation; L-lactaldehyde and glycerone phosphate from L-fucose: step 1/3. Its function is as follows. Converts the aldose L-fucose into the corresponding ketose L-fuculose. The chain is L-fucose isomerase from Shigella dysenteriae serotype 1 (strain Sd197).